We begin with the raw amino-acid sequence, 201 residues long: Adenylyl-sulfate kinase (201 aa).

An ATP-binding site is contributed by 35-42 (GLSGSGKS). The active-site Phosphoserine intermediate is the serine 109.

The protein belongs to the APS kinase family.

It catalyses the reaction adenosine 5'-phosphosulfate + ATP = 3'-phosphoadenylyl sulfate + ADP + H(+). It functions in the pathway sulfur metabolism; hydrogen sulfide biosynthesis; sulfite from sulfate: step 2/3. Its function is as follows. Catalyzes the synthesis of activated sulfate. This Klebsiella pneumoniae (strain 342) protein is Adenylyl-sulfate kinase.